We begin with the raw amino-acid sequence, 439 residues long: MQITIAIQDTTGDDQDFLSLQVFPDMTLETLRNSIQAETSHHPSTQHLYHNGNLITDNSKTLTQLNVTDGDMLALHVRETQRATAVPESQQGRPAAPPQQDPEFLRLQFLANPALRAEVERTAPDLAAAINDPQRWAQLFRERYDREQRERAERHRIIQQLNEDPFNPEAQARIEEIIRQERVTENLQTAMEHNPEVFGTVHMLYLDVEVNGAKVKALVDSGAQATIMSPDIAEACGIMRLVDKRYGGIAKGVGTAKIIGRVHTAPVKIGSLFLPCSFTVMEGKNVDMLLGLDMLKRYQACIDLAKNALVIQGEEIPFLGEADIPKATEEALQDEPTIEGPGGTTIGQRTGAVSGPGTAQHRQGQAGPSTAAQPGPSAPAPAPASASAPAPRAPQARSFPREHIEQLVALGADEQKAIRALEATDGNVEYAASLIFEGF.

The 82-residue stretch at 1 to 82 (MQITIAIQDT…LALHVRETQR (82 aa)) folds into the Ubiquitin-like domain. The tract at residues 82 to 101 (RATAVPESQQGRPAAPPQQD) is disordered. The active site involves Asp-220. A disordered region spans residues 333–398 (QDEPTIEGPG…PAPRAPQARS (66 aa)). 2 stretches are compositionally biased toward low complexity: residues 364 to 375 (GQAGPSTAAQPG) and 383 to 398 (PASA…QARS). The 41-residue stretch at 398-438 (SFPREHIEQLVALGADEQKAIRALEATDGNVEYAASLIFEG) folds into the UBA domain.

Belongs to the DDI1 family. As to quaternary structure, binds ubiquitin and polyubiquitinated proteins.

The protein resides in the cytoplasm. Its function is as follows. Probable aspartic protease. May be involved in the regulation of exocytosis. Acts as a linker between the 19S proteasome and polyubiquitinated proteins via UBA domain interactions with ubiquitin for their subsequent degradation. Required for S-phase checkpoint control. The polypeptide is DNA damage-inducible protein 1 (ddi-1) (Neurospora crassa (strain ATCC 24698 / 74-OR23-1A / CBS 708.71 / DSM 1257 / FGSC 987)).